The sequence spans 232 residues: Small heat shock protein, chloroplastic (232 aa).

Residues 1-25 (MAQSVSLSTIASPILSQKPGSSVKS) show a composition bias toward polar residues. Disordered stretches follow at residues 1–35 (MAQSVSLSTIASPILSQKPGSSVKSTPPCMASFPL) and 48–81 (RAQAGGDGDNKDNSVEVHRVNKDDQGTAVERKPR). Residues 1–46 (MAQSVSLSTIASPILSQKPGSSVKSTPPCMASFPLRRQLPRLGLRN) constitute a chloroplast transit peptide. The segment covering 55-78 (GDNKDNSVEVHRVNKDDQGTAVER) has biased composition (basic and acidic residues). A sHSP domain is found at 124 to 232 (IGGGEIRVPW…ERTVIDVQIQ (109 aa)).

This sequence belongs to the small heat shock protein (HSP20) family.

The protein localises to the plastid. Its subcellular location is the chloroplast. In Pisum sativum (Garden pea), this protein is Small heat shock protein, chloroplastic (HSP21).